Consider the following 65-residue polypeptide: Small ribosomal subunit protein bS21 (65 aa).

The segment covering 43 to 52 has biased composition (basic and acidic residues); it reads EKKRVKEALA. The segment at 43 to 65 is disordered; that stretch reads EKKRVKEALARKRSRKKARKEQD. The segment covering 53-65 has biased composition (basic residues); it reads RKRSRKKARKEQD.

Belongs to the bacterial ribosomal protein bS21 family.

The polypeptide is Small ribosomal subunit protein bS21 (Koribacter versatilis (strain Ellin345)).